The chain runs to 89 residues: MAKGQSLQDPFLNALRRERVPVSIYLVNGIKLQGQVESFDQFVILLKNTVSQMVYKHAISTVVPARALHITPTQSSQPGYVQHDDAPAE.

One can recognise a Sm domain in the interval 9-68 (DPFLNALRRERVPVSIYLVNGIKLQGQVESFDQFVILLKNTVSQMVYKHAISTVVPARAL).

The protein belongs to the Hfq family. In terms of assembly, homohexamer.

Its function is as follows. RNA chaperone that binds small regulatory RNA (sRNAs) and mRNAs to facilitate mRNA translational regulation in response to envelope stress, environmental stress and changes in metabolite concentrations. Also binds with high specificity to tRNAs. This Shewanella denitrificans (strain OS217 / ATCC BAA-1090 / DSM 15013) protein is RNA-binding protein Hfq.